The following is a 236-amino-acid chain: Venom metalloproteinase antarease-like TfasMP_A (236 aa).

In terms of domain architecture, Peptidase M12B spans 4-232 (IVVEYYIVTD…KPAASCIFEQ (229 aa)). H161 contacts Zn(2+). The active site involves E162. Positions 165 and 171 each coordinate Zn(2+).

This sequence belongs to the venom metalloproteinase (M12B) family. It depends on Zn(2+) as a cofactor. Post-translationally, contains several disulfide bonds. As to expression, expressed by the venom gland.

The protein resides in the secreted. Its activity is regulated as follows. Inhibited by EDTA. Its function is as follows. Acts as a metalloprotease. Penetrates intact tissue and specifically cleaves the vesicle-associated membrane protein 2 (VAMP2) (part of the SNARE complex) involved in pancreatic secretion, thus disrupting the normal vesicular traffic. The protein is Venom metalloproteinase antarease-like TfasMP_A of Tityus fasciolatus (Central Brazilian scorpion).